Consider the following 641-residue polypeptide: Depolymerase 1, capsule K47-specific (641 aa).

It in the N-terminal section; belongs to the Przondovirus depolymerase 2 family. As to quaternary structure, homotrimer. Interacts (via N-terminus) with depolymerase 1 (via N-terminus); this interaction probably gives rise to a branched tailspike.

The protein resides in the virion. Functions as a receptor binding protein (RBP) and probably mediates the attachment to the host capsular exopolysaccharides. Displays a depolymerase activity that specifically degrades some K47-type polysaccharides of Klebsiella pneumoniae capsule, which allows the phage to reach the host cell membrane and bind the entry receptor. The protein is Depolymerase 1, capsule K47-specific of Klebsiella pneumoniae (Bacteriophage vB_KpnP_IME205).